Reading from the N-terminus, the 164-residue chain is Urease subunit beta (164 aa).

2 stretches are compositionally biased toward polar residues: residues 1-10 and 20-32; these read MSTKTNSTKA and TNRG…GYSE. A disordered region spans residues 1–32; it reads MSTKTNSTKATSEKTDSLKTNRGTKSSAGYSE.

The protein belongs to the urease beta subunit family. As to quaternary structure, heterotrimer of UreA (gamma), UreB (beta) and UreC (alpha) subunits. Three heterotrimers associate to form the active enzyme.

The protein resides in the cytoplasm. It catalyses the reaction urea + 2 H2O + H(+) = hydrogencarbonate + 2 NH4(+). It participates in nitrogen metabolism; urea degradation; CO(2) and NH(3) from urea (urease route): step 1/1. The chain is Urease subunit beta from Yersinia enterocolitica serotype O:8 / biotype 1B (strain NCTC 13174 / 8081).